Here is a 679-residue protein sequence, read N- to C-terminus: UvrABC system protein B (679 aa).

One can recognise a Helicase ATP-binding domain in the interval 25–176 (EGVNGGERYQ…NLRGSLRDLV (152 aa)). 38–45 (GATGTGKT) is a binding site for ATP. The Beta-hairpin motif lies at 91–114 (YYDYYQPEAYVPVSDTYIAKTASI). Residues 429–591 (QVDDLLGEIR…ITPTAAGKKA (163 aa)) form the Helicase C-terminal domain. The UVR domain occupies 638-673 (PELIDQLELKMKESAKKLDFEEAANLRDRIKKLRQK).

Belongs to the UvrB family. Forms a heterotetramer with UvrA during the search for lesions. Interacts with UvrC in an incision complex.

It localises to the cytoplasm. Its function is as follows. The UvrABC repair system catalyzes the recognition and processing of DNA lesions. A damage recognition complex composed of 2 UvrA and 2 UvrB subunits scans DNA for abnormalities. Upon binding of the UvrA(2)B(2) complex to a putative damaged site, the DNA wraps around one UvrB monomer. DNA wrap is dependent on ATP binding by UvrB and probably causes local melting of the DNA helix, facilitating insertion of UvrB beta-hairpin between the DNA strands. Then UvrB probes one DNA strand for the presence of a lesion. If a lesion is found the UvrA subunits dissociate and the UvrB-DNA preincision complex is formed. This complex is subsequently bound by UvrC and the second UvrB is released. If no lesion is found, the DNA wraps around the other UvrB subunit that will check the other stand for damage. In Synechococcus sp. (strain CC9311), this protein is UvrABC system protein B.